The primary structure comprises 78 residues: UPF0349 protein BPUM_2879 (78 aa).

Belongs to the UPF0349 family.

The chain is UPF0349 protein BPUM_2879 from Bacillus pumilus (strain SAFR-032).